The sequence spans 354 residues: Transcription factor HHO2 (354 aa).

Over residues 93-102 (VQEEEEEDGE) the composition is skewed to acidic residues. Positions 93–112 (VQEEEEEDGEHESSPELVNN) are disordered. Residues 103 to 112 (HESSPELVNN) are compositionally biased toward basic and acidic residues. One can recognise an HTH myb-type domain in the interval 212 to 272 (THRKQRRCWS…HLQKYRLHTR (61 aa)). The H-T-H motif DNA-binding region spans 243-268 (PKQIRDHMKVDGLTNDEVKSHLQKYR). A disordered region spans residues 324 to 354 (VAQSPKRSLERSCNSPAASSSTNTNTSTPVS). A compositionally biased stretch (low complexity) spans 337-354 (NSPAASSSTNTNTSTPVS).

Its subcellular location is the nucleus. Its function is as follows. Probable transcription factor involved in phosphate homeostasis. Involved in the regulation of the developmental response of lateral roots, acquisition and/or mobilization of phosphate and expression of a subset of genes involved in phosphate sensing and signaling pathway. Is a target of the transcription factor PHR1. The polypeptide is Transcription factor HHO2 (Arabidopsis thaliana (Mouse-ear cress)).